The following is a 189-amino-acid chain: Ribonuclease HII (189 aa).

The region spanning 1–189 (MIAGVDEAGR…IAALLKNNKK (189 aa)) is the RNase H type-2 domain. The a divalent metal cation site is built by aspartate 6, glutamate 7, and aspartate 98.

This sequence belongs to the RNase HII family. It depends on Mn(2+) as a cofactor. Mg(2+) is required as a cofactor.

It is found in the cytoplasm. It catalyses the reaction Endonucleolytic cleavage to 5'-phosphomonoester.. In terms of biological role, endonuclease that specifically degrades the RNA of RNA-DNA hybrids. In Dichelobacter nodosus (strain VCS1703A), this protein is Ribonuclease HII.